We begin with the raw amino-acid sequence, 392 residues long: Elongation factor Tu (392 aa).

The tr-type G domain occupies 10 to 202 (KVHVNVGTIG…VLDEYIEDPI (193 aa)). The tract at residues 19 to 26 (GHVDHGKT) is G1. Position 19 to 26 (19 to 26 (GHVDHGKT)) interacts with GTP. Residue T26 coordinates Mg(2+). Residues 60–64 (GITIN) form a G2 region. The interval 81–84 (DCPG) is G3. GTP contacts are provided by residues 81 to 85 (DCPGH) and 136 to 139 (NKCD). A G4 region spans residues 136–139 (NKCD). A G5 region spans residues 174-176 (SAL).

Belongs to the TRAFAC class translation factor GTPase superfamily. Classic translation factor GTPase family. EF-Tu/EF-1A subfamily. In terms of assembly, monomer.

It is found in the cytoplasm. It catalyses the reaction GTP + H2O = GDP + phosphate + H(+). GTP hydrolase that promotes the GTP-dependent binding of aminoacyl-tRNA to the A-site of ribosomes during protein biosynthesis. The chain is Elongation factor Tu from Apple proliferation phytoplasma.